Reading from the N-terminus, the 338-residue chain is Fructose-1,6-bisphosphatase 1 (338 aa).

At threonine 2 the chain carries N-acetylthreonine. AMP-binding positions include 18-22 (VMEEG) and 28-32 (TGEMT). Mg(2+) is bound by residues aspartate 69 and glutamate 98. Position 113–114 (113–114 (KY)) interacts with AMP. Mg(2+) is bound by residues aspartate 119, leucine 121, and aspartate 122. Residue 122-125 (DGSS) participates in substrate binding. Arginine 141 provides a ligand contact to AMP. Residue lysine 151 is modified to N6-succinyllysine. Phosphoserine; by PKA is present on serine 208. Substrate contacts are provided by residues 213 to 216 (NEGY), 244 to 249 (RYVGSM), tyrosine 265, and 275 to 277 (KLR). A phosphotyrosine mark is found at tyrosine 216, tyrosine 245, and tyrosine 265. Residue glutamate 281 participates in Mg(2+) binding.

Belongs to the FBPase class 1 family. As to quaternary structure, homotetramer. Requires Mg(2+) as cofactor.

The enzyme catalyses beta-D-fructose 1,6-bisphosphate + H2O = beta-D-fructose 6-phosphate + phosphate. It functions in the pathway carbohydrate biosynthesis; gluconeogenesis. Its activity is regulated as follows. Subject to complex allosteric regulation. The enzyme can assume an active R-state, or an inactive T-state. Intermediate conformations may exist. AMP acts as an allosteric inhibitor. AMP binding affects the turnover of bound substrate and not the affinity for substrate. Fructose 2,6-bisphosphate acts as a competitive inhibitor. Fructose 2,6-bisphosphate and AMP have synergistic effects. Its function is as follows. Catalyzes the hydrolysis of fructose 1,6-bisphosphate to fructose 6-phosphate in the presence of divalent cations, acting as a rate-limiting enzyme in gluconeogenesis. Plays a role in regulating glucose sensing and insulin secretion of pancreatic beta-cells. Appears to modulate glycerol gluconeogenesis in liver. Important regulator of appetite and adiposity; increased expression of the protein in liver after nutrient excess increases circulating satiety hormones and reduces appetite-stimulating neuropeptides and thus seems to provide a feedback mechanism to limit weight gain. This chain is Fructose-1,6-bisphosphatase 1 (FBP1), found in Sus scrofa (Pig).